The sequence spans 1426 residues: Homeobox protein cut-like 2 (1426 aa).

The segment at 77–104 (PEPPSAREQNEGTCPTGHTPANGNHLPG) is disordered. Phosphoserine is present on S81. A coiled-coil region spans residues 131–311 (ITLAARLGEA…IKTELSILRA (181 aa)). Disordered stretches follow at residues 351–419 (ALLA…FPSL), 460–488 (KPPS…GPEE), 599–628 (EIES…STSE), 653–676 (ESGP…TASQ), 743–769 (YASV…PRGD), and 904–977 (LGQG…SSSQ). Positions 374–395 (PPYPPQLPPPPGPEDPLSPSPA) are enriched in pro residues. 2 stretches are compositionally biased toward low complexity: residues 397–408 (PLLGPSLGPDGP) and 460–470 (KPPSAPAASVP). The segment at residues 482 to 569 (DGAGPEEEQL…VLALRTIQVR (88 aa)) is a DNA-binding region (CUT 1). A coiled-coil region spans residues 587-655 (DAIKSILEQA…QQALLEMESG (69 aa)). The span at 608–628 (SKNSPASVSIPNGTASSSTSE) shows a compositional bias: polar residues. Composition is skewed to low complexity over residues 743–757 (YASV…SSYS), 910–928 (QAPT…EPTS), and 965–976 (SSSLGGKPFSSS). Residues 828–915 (QYELYMYREV…QGQGQAPTQQ (88 aa)) constitute a DNA-binding region (CUT 2). The segment at residues 983 to 1070 (QEMVAMSPEL…VEKLRDMKKL (88 aa)) is a DNA-binding region (CUT 3). Positions 1113 to 1172 (AKKPRVVLAPAEKEALRKAYQLEPYPSQQTIELLSFQLNLKTNTVINWFHNYRSRMRREM) form a DNA-binding region, homeobox. The interval 1177 to 1392 (TQDDPDFDPS…AALHPSTKVN (216 aa)) is disordered. Composition is skewed to basic and acidic residues over residues 1233–1245 (APDR…KQEE) and 1260–1274 (DPDR…EHTH). Over residues 1318-1332 (LSFKSTSESSCCSLE) the composition is skewed to low complexity. Residues 1338 to 1350 (PSVISSPDLTTCV) are compositionally biased toward polar residues. Over residues 1351-1364 (SPAPSSSAPISPSL) the composition is skewed to low complexity.

It belongs to the CUT homeobox family. As to expression, restricted to neural tissues. Expressed exclusively in the central and peripheral nervous systems.

The protein resides in the nucleus. Transcription factor involved in the control of neuronal proliferation and differentiation in the brain. Regulates dendrite development and branching, dendritic spine formation, and synaptogenesis in cortical layers II-III. Binds to DNA in a sequence-specific manner. The sequence is that of Homeobox protein cut-like 2 (Cux2) from Mus musculus (Mouse).